Reading from the N-terminus, the 257-residue chain is Transmembrane protein C257L (257 aa).

Transmembrane regions (helical) follow at residues 123–143 (LELLGYSPTSLIGGDLMFTAL) and 163–183 (MMIFFLIILLCIILGIFYVLV).

This sequence belongs to the asfivirus C257R family.

The protein localises to the host membrane. The protein resides in the virion. This is Transmembrane protein C257L from Ornithodoros (relapsing fever ticks).